Reading from the N-terminus, the 413-residue chain is PCI domain-containing protein 2 homolog (413 aa).

Residues 222–403 (VAYNYFLGRK…QKLVISKMNA (182 aa)) form the PCI domain.

Belongs to the CSN12 family.

This chain is PCI domain-containing protein 2 homolog, found in Caenorhabditis elegans.